We begin with the raw amino-acid sequence, 314 residues long: Methionyl-tRNA formyltransferase (314 aa).

112-115 (SLLP) contributes to the (6S)-5,6,7,8-tetrahydrofolate binding site.

The protein belongs to the Fmt family.

The catalysed reaction is L-methionyl-tRNA(fMet) + (6R)-10-formyltetrahydrofolate = N-formyl-L-methionyl-tRNA(fMet) + (6S)-5,6,7,8-tetrahydrofolate + H(+). Attaches a formyl group to the free amino group of methionyl-tRNA(fMet). The formyl group appears to play a dual role in the initiator identity of N-formylmethionyl-tRNA by promoting its recognition by IF2 and preventing the misappropriation of this tRNA by the elongation apparatus. The polypeptide is Methionyl-tRNA formyltransferase (Tolumonas auensis (strain DSM 9187 / NBRC 110442 / TA 4)).